We begin with the raw amino-acid sequence, 382 residues long: Mannitol-1-phosphate 5-dehydrogenase (382 aa).

An NAD(+)-binding site is contributed by 3–14; that stretch reads ALHFGAGNIGRG. At K269 the chain carries N6-acetyllysine.

Belongs to the mannitol dehydrogenase family.

The catalysed reaction is D-mannitol 1-phosphate + NAD(+) = beta-D-fructose 6-phosphate + NADH + H(+). The protein is Mannitol-1-phosphate 5-dehydrogenase of Escherichia coli O9:H4 (strain HS).